The sequence spans 541 residues: Copper transport protein CutJ (541 aa).

The first 25 residues, 1–25 (MKRNRWWIILLLFLVFLPKTSFAHA), serve as a signal peptide directing secretion. Residues His-24 and His-110 each coordinate Cu cation. 8 consecutive transmembrane segments (helical) span residues 146–166 (AILY…LFWY), 180–200 (ILTG…PIQT), 228–248 (SIWI…IPAI), 262–282 (PLIF…AAVV), 293–313 (FLHL…VLLL), 335–355 (WALT…FFII), 370–390 (LLVK…HFLL), and 407–427 (WAIG…PSPP).

It in the N-terminal section; belongs to the CopC family. The protein in the C-terminal section; belongs to the CopD family.

The protein localises to the cell membrane. Its function is as follows. Involved in uptake of extracellular oxidized copper under copper-limiting conditions. The sequence is that of Copper transport protein CutJ from Bacillus subtilis (strain 168).